A 461-amino-acid chain; its full sequence is Porin AaxA (461 aa).

The signal sequence occupies residues 1–22 (MSFRSVLLTALLSLSFTTTMQA).

It belongs to the OprB family.

The protein localises to the cell outer membrane. Facilitates L-arginine uptake, as part of the AaxABC system. The arginine uptake by the bacterium in the macrophage may be a virulence factor against the host innate immune response. In Chlamydia trachomatis serovar D (strain ATCC VR-885 / DSM 19411 / UW-3/Cx), this protein is Porin AaxA (aaxA).